Here is a 250-residue protein sequence, read N- to C-terminus: Triosephosphate isomerase (250 aa).

Substrate is bound at residue 9–11 (NWK). Residue H94 is the Electrophile of the active site. The active-site Proton acceptor is E166. Substrate-binding positions include G172, S211, and 232-233 (GG).

Belongs to the triosephosphate isomerase family. In terms of assembly, homodimer.

It localises to the cytoplasm. It catalyses the reaction D-glyceraldehyde 3-phosphate = dihydroxyacetone phosphate. Its pathway is carbohydrate biosynthesis; gluconeogenesis. It participates in carbohydrate degradation; glycolysis; D-glyceraldehyde 3-phosphate from glycerone phosphate: step 1/1. Its function is as follows. Involved in the gluconeogenesis. Catalyzes stereospecifically the conversion of dihydroxyacetone phosphate (DHAP) to D-glyceraldehyde-3-phosphate (G3P). The polypeptide is Triosephosphate isomerase (Methylococcus capsulatus (strain ATCC 33009 / NCIMB 11132 / Bath)).